The sequence spans 187 residues: Cell division protein SepF (187 aa).

Residues 21–97 (EVEVPDKQQQ…ATPNNASQES (77 aa)) form a disordered region. 2 stretches are compositionally biased toward polar residues: residues 38-63 (EQSQ…YTTT) and 70-97 (RMSN…SQES).

It belongs to the SepF family. Homodimer. Interacts with FtsZ.

The protein localises to the cytoplasm. Its function is as follows. Cell division protein that is part of the divisome complex and is recruited early to the Z-ring. Probably stimulates Z-ring formation, perhaps through the cross-linking of FtsZ protofilaments. Its function overlaps with FtsA. This chain is Cell division protein SepF, found in Staphylococcus aureus (strain Mu3 / ATCC 700698).